The primary structure comprises 527 residues: Rhamnogalacturonate lyase A (527 aa).

Positions 1 to 19 (MLKASLLSFVAFTAQVAHA) are cleaved as a signal peptide. 2 cysteine pairs are disulfide-bonded: cysteine 49-cysteine 92 and cysteine 183-cysteine 192. An N-linked (GlcNAc...) asparagine glycan is attached at asparagine 350.

This sequence belongs to the polysaccharide lyase 4 family.

The protein resides in the secreted. It carries out the reaction Endotype eliminative cleavage of L-alpha-rhamnopyranosyl-(1-&gt;4)-alpha-D-galactopyranosyluronic acid bonds of rhamnogalacturonan I domains in ramified hairy regions of pectin leaving L-rhamnopyranose at the reducing end and 4-deoxy-4,5-unsaturated D-galactopyranosyluronic acid at the non-reducing end.. Pectinolytic enzyme that has a positive effect in the apple hot-mash liquefaction process. This endolyase hydrolyzes the alpha-L-rhamnopyranosyl-(1,4)-alpha-D-galacturonopyranosyl glycosidic linkage by beta-elimination, thereby generating oligosaccharides terminating at the non-reducing end with a hex-4-enopyranosyluronic acid residue. In Aspergillus aculeatus, this protein is Rhamnogalacturonate lyase A (rglA).